Consider the following 962-residue polypeptide: Oncostatin-M-specific receptor subunit beta (962 aa).

A signal peptide spans 1-28; it reads MAFSVVLHQVTFLLAVLSLRTSQSKVLG. At 29–738 the chain is on the extracellular side; it reads EPLQLTPEIH…VTTPDVRSHM (710 aa). A glycan (N-linked (GlcNAc...) asparagine) is linked at Asn219. 5 consecutive Fibronectin type-III domains span residues 237-332, 333-426, 428-527, 528-621, and 623-734; these read EPKN…VHPK, APHD…TPEA, PSEA…SGHE, EVHE…TQEL, and PSVN…TPDV. Cys243 and Cys253 are oxidised to a cystine. Asn324 carries an N-linked (GlcNAc...) asparagine glycan. The WSXWS motif signature appears at 413–417; it reads WSDWM. 3 N-linked (GlcNAc...) asparagine glycosylation sites follow: Asn492, Asn578, and Asn723. A helical transmembrane segment spans residues 739-759; it reads LLQIILPMTLGVFLSIIVCYW. Over 760–962 the chain is Cytoplasmic; the sequence is KSQWVKEKCY…ASLKENNLTS (203 aa). Positions 768 to 776 match the Box 1 motif motif; the sequence is CYPDIPNPY. The segment at 818-840 is disordered; the sequence is VGSGKLHTEDVPTKPPLVPTEKD.

It belongs to the type I cytokine receptor family. Type 2 subfamily. Heterodimer composed of OSMR and IL6ST (type II OSM receptor). Heterodimer with IL31RA to form the IL31 receptor. Widely expressed. Expressed at high levels in the liver, skin and spleen. In the liver it is expressed exclusively in the oval cells.

It localises to the membrane. Associates with IL31RA to form the IL31 receptor. Binds IL31 and activates STAT1, STAT3 and STAT5. Capable of transducing OSM-specific signaling events. The OSM/OSM-R system is pivotal in the differentiation of oval cells into hepatocytes, thereby promoting liver regeneration. This Rattus norvegicus (Rat) protein is Oncostatin-M-specific receptor subunit beta (Osmr).